The sequence spans 146 residues: 3-dehydroquinate dehydratase (146 aa).

Residue Tyr24 is the Proton acceptor of the active site. Residues Asn75, His81, and Asp88 each coordinate substrate. His101 serves as the catalytic Proton donor. Residues 102–103 (LS) and Arg112 contribute to the substrate site.

This sequence belongs to the type-II 3-dehydroquinase family. Homododecamer.

It carries out the reaction 3-dehydroquinate = 3-dehydroshikimate + H2O. It functions in the pathway metabolic intermediate biosynthesis; chorismate biosynthesis; chorismate from D-erythrose 4-phosphate and phosphoenolpyruvate: step 3/7. Functionally, catalyzes a trans-dehydration via an enolate intermediate. The sequence is that of 3-dehydroquinate dehydratase from Caulobacter vibrioides (strain ATCC 19089 / CIP 103742 / CB 15) (Caulobacter crescentus).